The primary structure comprises 580 residues: CRISPR-associated exonuclease Cas4/endonuclease Cas1 fusion (580 aa).

Residues 1–223 form a CRISPR-associated exonuclease Cas4 region; that stretch reads MAPSDTPPSA…RCSLLPICLP (223 aa). Residue cysteine 44 participates in [4Fe-4S] cluster binding. Residues aspartate 112 and glutamate 125 each coordinate Mn(2+). Positions 212, 215, and 221 each coordinate [4Fe-4S] cluster. Residues 248-580 are CRISPR-associated endonuclease Cas1; it reads LYGQTPGARI…IPRYPHYCPR (333 aa). Mn(2+) contacts are provided by glutamate 401, histidine 472, and glutamate 487.

In the N-terminal section; belongs to the CRISPR-associated exonuclease Cas4 family. It in the C-terminal section; belongs to the CRISPR-associated endonuclease Cas1 family. In terms of assembly, homodimer, forms a heterotetramer with a Cas2 homodimer. It depends on [4Fe-4S] cluster as a cofactor. The cofactor is Mg(2+). Mn(2+) is required as a cofactor.

It catalyses the reaction exonucleolytic cleavage in the 5'- to 3'-direction to yield nucleoside 3'-phosphates.. Functionally, CRISPR (clustered regularly interspaced short palindromic repeat), is an adaptive immune system that provides protection against mobile genetic elements (viruses, transposable elements and conjugative plasmids). CRISPR clusters contain spacers, sequences complementary to antecedent mobile elements, and target invading nucleic acids. CRISPR clusters are transcribed and processed into CRISPR RNA (crRNA). The Cas4 region acts as a ssDNA exonuclease, while the Cas1 region acts as a dsDNA endonuclease. Involved in the integration of spacer DNA into the CRISPR cassette. The polypeptide is CRISPR-associated exonuclease Cas4/endonuclease Cas1 fusion (cas4-cas1) (Rhodospirillum rubrum (strain ATCC 11170 / ATH 1.1.1 / DSM 467 / LMG 4362 / NCIMB 8255 / S1)).